A 428-amino-acid polypeptide reads, in one-letter code: Enolase (428 aa).

Q164 provides a ligand contact to (2R)-2-phosphoglycerate. E208 functions as the Proton donor in the catalytic mechanism. Mg(2+) contacts are provided by D245, E286, and D313. 4 residues coordinate (2R)-2-phosphoglycerate: K338, R367, S368, and K389. The active-site Proton acceptor is K338.

It belongs to the enolase family. Requires Mg(2+) as cofactor.

It localises to the cytoplasm. Its subcellular location is the secreted. The protein localises to the cell surface. The catalysed reaction is (2R)-2-phosphoglycerate = phosphoenolpyruvate + H2O. It participates in carbohydrate degradation; glycolysis; pyruvate from D-glyceraldehyde 3-phosphate: step 4/5. Catalyzes the reversible conversion of 2-phosphoglycerate (2-PG) into phosphoenolpyruvate (PEP). It is essential for the degradation of carbohydrates via glycolysis. The sequence is that of Enolase from Pyrococcus abyssi (strain GE5 / Orsay).